Here is a 260-residue protein sequence, read N- to C-terminus: Adenosylcobinamide-GDP ribazoletransferase (260 aa).

Transmembrane regions (helical) follow at residues 3 to 23, 36 to 56, 60 to 80, 108 to 128, 133 to 153, 180 to 200, 206 to 226, and 239 to 259; these read APLW…LPAW, FAPW…LVLI, WPTS…SGGL, VGAS…ASLL, LAPL…LWAM, ALPA…LMIV, MVLM…PELL, and GASV…LLPA.

This sequence belongs to the CobS family. Requires Mg(2+) as cofactor.

The protein localises to the cell inner membrane. It carries out the reaction alpha-ribazole + adenosylcob(III)inamide-GDP = adenosylcob(III)alamin + GMP + H(+). The catalysed reaction is alpha-ribazole 5'-phosphate + adenosylcob(III)inamide-GDP = adenosylcob(III)alamin 5'-phosphate + GMP + H(+). Its pathway is cofactor biosynthesis; adenosylcobalamin biosynthesis; adenosylcobalamin from cob(II)yrinate a,c-diamide: step 7/7. Functionally, joins adenosylcobinamide-GDP and alpha-ribazole to generate adenosylcobalamin (Ado-cobalamin). Also synthesizes adenosylcobalamin 5'-phosphate from adenosylcobinamide-GDP and alpha-ribazole 5'-phosphate. The sequence is that of Adenosylcobinamide-GDP ribazoletransferase from Prochlorococcus marinus (strain MIT 9313).